Consider the following 78-residue polypeptide: MSRRKREDPWRYEAAIAEVESLIAQIESGELDLAEVVERFQQAAQTLKRCAEFLEEKRQQVEILIEELNQDDEDWQAF.

Belongs to the XseB family. In terms of assembly, heterooligomer composed of large and small subunits.

Its subcellular location is the cytoplasm. The catalysed reaction is Exonucleolytic cleavage in either 5'- to 3'- or 3'- to 5'-direction to yield nucleoside 5'-phosphates.. Bidirectionally degrades single-stranded DNA into large acid-insoluble oligonucleotides, which are then degraded further into small acid-soluble oligonucleotides. The protein is Exodeoxyribonuclease 7 small subunit of Synechococcus sp. (strain JA-3-3Ab) (Cyanobacteria bacterium Yellowstone A-Prime).